The primary structure comprises 142 residues: uncharacterized protein (142 aa).

The signal sequence occupies residues 1 to 26 (MITEFIKSFLLFFFLPFFLSMPMIFA).

This is an uncharacterized protein from Schizosaccharomyces pombe (strain 972 / ATCC 24843) (Fission yeast).